The chain runs to 96 residues: Large ribosomal subunit protein bL27 (96 aa).

The propeptide occupies 1-9 (MLRLDLQFF).

The protein belongs to the bacterial ribosomal protein bL27 family. Post-translationally, the N-terminus is cleaved by ribosomal processing cysteine protease Prp.

The polypeptide is Large ribosomal subunit protein bL27 (Anoxybacillus flavithermus (strain DSM 21510 / WK1)).